A 663-amino-acid chain; its full sequence is DNA ligase 1 (663 aa).

NAD(+) is bound by residues 30–34 (DAEYD) and 78–79 (SL). The N6-AMP-lysine intermediate role is filled by Lys105. Arg126, Glu161, and Lys294 together coordinate NAD(+). The Zn(2+) site is built by Cys389, Cys392, Cys407, and Cys412. The BRCT domain maps to 574–663 (AAGAPLAGKT…WAQLIEAKLV (90 aa)).

Belongs to the NAD-dependent DNA ligase family. LigA subfamily. Requires Mg(2+) as cofactor. Mn(2+) serves as cofactor.

It catalyses the reaction NAD(+) + (deoxyribonucleotide)n-3'-hydroxyl + 5'-phospho-(deoxyribonucleotide)m = (deoxyribonucleotide)n+m + AMP + beta-nicotinamide D-nucleotide.. Functionally, DNA ligase that catalyzes the formation of phosphodiester linkages between 5'-phosphoryl and 3'-hydroxyl groups in double-stranded DNA using NAD as a coenzyme and as the energy source for the reaction. It is essential for DNA replication and repair of damaged DNA. This Nocardia farcinica (strain IFM 10152) protein is DNA ligase 1.